The primary structure comprises 218 residues: Sulfite reductase, assimilatory-type (218 aa).

The [4Fe-4S] cluster site is built by C91, C97, C131, and C135. A siroheme-binding site is contributed by C135.

Functionally, this enzyme catalyzes the 6-electron reduction of sulfite to sulfide. This is one of several activities required for the biosynthesis of L-cysteine from sulfate. This chain is Sulfite reductase, assimilatory-type, found in Nitratidesulfovibrio vulgaris (strain ATCC 29579 / DSM 644 / CCUG 34227 / NCIMB 8303 / VKM B-1760 / Hildenborough) (Desulfovibrio vulgaris).